Reading from the N-terminus, the 166-residue chain is Ubiquitin-fold modifier-conjugating enzyme 1 (166 aa).

Residue Cys116 is the Glycyl thioester intermediate of the active site.

Belongs to the ubiquitin-conjugating enzyme family. UFC1 subfamily. Interacts with UBA5 (via C-terminus). Interacts with UFL1. Interacts with UFM1.

Its function is as follows. E2-like enzyme which specifically catalyzes the second step in ufmylation. Accepts the ubiquitin-like modifier UFM1 from the E1 enzyme UBA5 and forms an intermediate with UFM1 via a thioester linkage. Ufmylation is involved in various processes, such as ribosome recycling, response to DNA damage, interferon response or reticulophagy (also called ER-phagy). The chain is Ubiquitin-fold modifier-conjugating enzyme 1 (ufc1) from Danio rerio (Zebrafish).